Reading from the N-terminus, the 62-residue chain is Ribulose bisphosphate carboxylase/oxygenase activase, chloroplastic (62 aa).

This sequence belongs to the RuBisCO activase family.

The protein localises to the plastid. Its subcellular location is the chloroplast stroma. Its function is as follows. Activation of RuBisCO (ribulose-1,5-bisphosphate carboxylase/oxygenase; EC 4.1.1.39) involves the ATP-dependent carboxylation of the epsilon-amino group of lysine leading to a carbamate structure. The protein is Ribulose bisphosphate carboxylase/oxygenase activase, chloroplastic of Vitis sp. (Grape).